A 589-amino-acid chain; its full sequence is Aspartate--tRNA ligase (589 aa).

Glutamate 174 is an L-aspartate binding site. Residues 198-201 (QLFK) form an aspartate region. An L-aspartate-binding site is contributed by arginine 220. ATP is bound by residues 220–222 (RDE) and glutamine 229. Residue histidine 448 participates in L-aspartate binding. Glutamate 484 provides a ligand contact to ATP. Residue arginine 491 coordinates L-aspartate. 536–539 (GLDR) contacts ATP.

Belongs to the class-II aminoacyl-tRNA synthetase family. Type 1 subfamily. As to quaternary structure, homodimer.

It localises to the cytoplasm. It carries out the reaction tRNA(Asp) + L-aspartate + ATP = L-aspartyl-tRNA(Asp) + AMP + diphosphate. Its function is as follows. Catalyzes the attachment of L-aspartate to tRNA(Asp) in a two-step reaction: L-aspartate is first activated by ATP to form Asp-AMP and then transferred to the acceptor end of tRNA(Asp). This Leuconostoc citreum (strain KM20) protein is Aspartate--tRNA ligase.